The sequence spans 125 residues: Holo-[acyl-carrier-protein] synthase (125 aa).

Residues Asp-8 and Glu-57 each contribute to the Mg(2+) site.

Belongs to the P-Pant transferase superfamily. AcpS family. Mg(2+) is required as a cofactor.

It localises to the cytoplasm. It carries out the reaction apo-[ACP] + CoA = holo-[ACP] + adenosine 3',5'-bisphosphate + H(+). Its function is as follows. Transfers the 4'-phosphopantetheine moiety from coenzyme A to a Ser of acyl-carrier-protein. The polypeptide is Holo-[acyl-carrier-protein] synthase (Neisseria meningitidis serogroup A / serotype 4A (strain DSM 15465 / Z2491)).